The following is a 650-amino-acid chain: Epithelial sodium channel subunit gamma (650 aa).

At 1 to 55 (MAPGEKIKAKIKKNLPVRGPQAPTIKDLMHWYCMNTNTHGCRRIVVSRGRLRRLL) the chain is on the cytoplasmic side. A helical membrane pass occupies residues 56–76 (WIAFTLTAVALIIWQCALLVF). Over 77 to 542 (SFYTVSVSIK…GGQLGLWMSC (466 aa)) the chain is Extracellular. Intrachain disulfides connect Cys100/Cys284, Cys208/Cys215, Cys261/Cys268, Cys373/Cys458, Cys395/Cys454, Cys399/Cys450, Cys408/Cys435, and Cys410/Cys424. The tract at residues 135 to 222 (RKRREAGSMP…SDCATYTFSS (88 aa)) is gating release of inhibition by proteolysis (GRIP); protease-sensitive region that is responsible for the proteolytic activation of the channel. The N-linked (GlcNAc...) asparagine glycan is linked to Asn210. Asn272 is a glycosylation site (N-linked (GlcNAc...) asparagine). The N-linked (GlcNAc...) asparagine glycan is linked to Asn498. The chain crosses the membrane as a helical span at residues 543–563 (SVVCVIEIIEVFFIDFFSIIA). The Cytoplasmic segment spans residues 564–650 (RRQWHKAKDW…LTDTQLTNEL (87 aa)). A disordered region spans residues 577–628 (RQTPPSTETPSSRQGQDNPALDTDDDLPTFTSAMRLPPAPGSTVPGTPPPRY). Residues 579–593 (TPPSTETPSSRQGQD) show a composition bias toward polar residues. A PY motif; mediates interaction, ubiquitination and inhibition by NEDD4 and NEDD4L motif is present at residues 624–628 (PPPRY). The short motif at 624–628 (PPPRY) is the PY motif; recruits WW domain-containing proteins and is thereby required for ubiquitination and inhibition of the channel by NEDD4 and NEDD4L element.

This sequence belongs to the amiloride-sensitive sodium channel (TC 1.A.6) family. SCNN1G subfamily. Component of the heterotrimeric epithelial sodium channel (ENaC) composed of an alpha/SCNN1A, a beta/SCNN1B and a gamma/SCNN1G subunit. Interacts with WWP1 (via WW domains). Interacts with WWP2 (via WW domains); inhibits the channel. Interacts with the full-length immature form of PCSK9 (pro-PCSK9); inhibits ENaC by promoting its proteasomal degradation. Interacts with BPIFA1; the interaction is indirect via SCNN1B and inhibits the proteolytic maturation of SCNN1A and SCNN1G and the activation of ENaC. In terms of processing, phosphorylated on serine and threonine residues. Aldosterone and insulin increase the basal level of phosphorylation. Ubiquitinated. Can be ubiquitinated at multiple sites and undergo monoubiquitination and polyubiquitination. Ubiquitination by NEDD4 or NEDD4L inhibits the ENaC channel through endocytosis, intracellular retention and degradation of its individual subunits. Post-translationally, ENaC is activated through the proteolytic maturation of its subunits. Furin cleaves the SCNN1G subunit first, followed by cleavage by prostasin (PRSS8), which results in a stepwise increase in the open probability of the channel due to the release of an inhibitory tract. BPIFA1, which is recruited by the SCNN1B subunit, prevents the proteolytic activation of ENaC. In terms of processing, N-glycosylated. N-linked glycans are processed to complex type during ENaC complex assembly and transport to the plasma membrane.

It is found in the apical cell membrane. It catalyses the reaction Na(+)(in) = Na(+)(out). Originally identified and characterized by its inhibition by the diuretic drug amiloride. In terms of biological role, this is one of the three pore-forming subunits of the heterotrimeric epithelial sodium channel (ENaC), a critical regulator of sodium balance and fluid homeostasis. ENaC operates in epithelial tissues, where it mediates the electrodiffusion of sodium ions from extracellular fluid through the apical membrane of cells, with water following osmotically. It plays a key role in maintaining sodium homeostasis through electrogenic sodium reabsorption in the kidneys. Additionally, ENaC is essential for airway surface liquid homeostasis, which is crucial for proper mucus clearance. The protein is Epithelial sodium channel subunit gamma of Rattus norvegicus (Rat).